The primary structure comprises 419 residues: CCA-adding enzyme (419 aa).

ATP contacts are provided by Ser54 and Arg57. CTP is bound by residues Ser54 and Arg57. Mg(2+) is bound by residues Asp66, Asp68, and Asp118. Residues His141, Lys161, and Tyr170 each coordinate ATP. CTP is bound by residues His141, Lys161, and Tyr170.

Belongs to the tRNA nucleotidyltransferase/poly(A) polymerase family. Archaeal CCA-adding enzyme subfamily. In terms of assembly, homodimer. Requires Mg(2+) as cofactor.

The enzyme catalyses a tRNA precursor + 2 CTP + ATP = a tRNA with a 3' CCA end + 3 diphosphate. The catalysed reaction is a tRNA with a 3' CCA end + 2 CTP + ATP = a tRNA with a 3' CCACCA end + 3 diphosphate. Catalyzes the addition and repair of the essential 3'-terminal CCA sequence in tRNAs without using a nucleic acid template. Adds these three nucleotides in the order of C, C, and A to the tRNA nucleotide-73, using CTP and ATP as substrates and producing inorganic pyrophosphate. tRNA 3'-terminal CCA addition is required both for tRNA processing and repair. Also involved in tRNA surveillance by mediating tandem CCA addition to generate a CCACCA at the 3' terminus of unstable tRNAs. While stable tRNAs receive only 3'-terminal CCA, unstable tRNAs are marked with CCACCA and rapidly degraded. The protein is CCA-adding enzyme of Pyrobaculum aerophilum (strain ATCC 51768 / DSM 7523 / JCM 9630 / CIP 104966 / NBRC 100827 / IM2).